The primary structure comprises 430 residues: Phosphoserine aminotransferase 1, chloroplastic (430 aa).

The transit peptide at 1 to 51 (MAATTNSFLVGSNNTQIPALKPKSSSQSFLHLSKPNTVNFVSKTKPVAVRC) directs the protein to the chloroplast. Val52 is modified (N-acetylvaline). Residue Arg111 coordinates L-glutamate. Residues 145–146 (AT), Trp171, Thr221, Asp241, and Gln264 each bind pyridoxal 5'-phosphate. Lys265 carries the N6-(pyridoxal phosphate)lysine modification. A pyridoxal 5'-phosphate-binding site is contributed by 306–307 (NT).

This sequence belongs to the class-V pyridoxal-phosphate-dependent aminotransferase family. SerC subfamily. In terms of assembly, homodimer. The cofactor is pyridoxal 5'-phosphate. As to expression, ubiquitous, but expressed preferentially in light-grown roots and shoots. Detected in root meristems and in root tissues surrounding the vascular bundle.

The protein localises to the plastid. Its subcellular location is the chloroplast. The enzyme catalyses O-phospho-L-serine + 2-oxoglutarate = 3-phosphooxypyruvate + L-glutamate. The catalysed reaction is 4-(phosphooxy)-L-threonine + 2-oxoglutarate = (R)-3-hydroxy-2-oxo-4-phosphooxybutanoate + L-glutamate. Its pathway is amino-acid biosynthesis; L-serine biosynthesis; L-serine from 3-phospho-D-glycerate: step 2/3. The protein operates within cofactor biosynthesis; pyridoxine 5'-phosphate biosynthesis; pyridoxine 5'-phosphate from D-erythrose 4-phosphate: step 3/5. With respect to regulation, inhibited by high concentration of cysteine and by 3-phosphonooxypyruvate. Not inhibited by serine, threonine, valine, glycine, tryptophan and O-acetyl-L-serine. Functionally, involved in the plastidial phosphorylated pathway of serine biosynthesis (PPSB). Catalyzes the reversible conversion of 3-phosphohydroxypyruvate to phosphoserine. In Arabidopsis thaliana (Mouse-ear cress), this protein is Phosphoserine aminotransferase 1, chloroplastic.